The following is a 251-amino-acid chain: Triosephosphate isomerase (251 aa).

9 to 11 lines the substrate pocket; that stretch reads NWK. Histidine 95 functions as the Electrophile in the catalytic mechanism. Catalysis depends on glutamate 167, which acts as the Proton acceptor. Substrate contacts are provided by residues glycine 173, serine 213, and 234 to 235; that span reads GG.

The protein belongs to the triosephosphate isomerase family. In terms of assembly, homodimer.

It localises to the cytoplasm. The catalysed reaction is D-glyceraldehyde 3-phosphate = dihydroxyacetone phosphate. The protein operates within carbohydrate biosynthesis; gluconeogenesis. It participates in carbohydrate degradation; glycolysis; D-glyceraldehyde 3-phosphate from glycerone phosphate: step 1/1. In terms of biological role, involved in the gluconeogenesis. Catalyzes stereospecifically the conversion of dihydroxyacetone phosphate (DHAP) to D-glyceraldehyde-3-phosphate (G3P). This chain is Triosephosphate isomerase, found in Lactobacillus gasseri (strain ATCC 33323 / DSM 20243 / BCRC 14619 / CIP 102991 / JCM 1131 / KCTC 3163 / NCIMB 11718 / NCTC 13722 / AM63).